A 151-amino-acid chain; its full sequence is Ribosomal RNA large subunit methyltransferase H (151 aa).

S-adenosyl-L-methionine-binding positions include Gly-100 and 119–124 (LSKMTF).

This sequence belongs to the RNA methyltransferase RlmH family. Homodimer.

It is found in the cytoplasm. It catalyses the reaction pseudouridine(1915) in 23S rRNA + S-adenosyl-L-methionine = N(3)-methylpseudouridine(1915) in 23S rRNA + S-adenosyl-L-homocysteine + H(+). Specifically methylates the pseudouridine at position 1915 (m3Psi1915) in 23S rRNA. The chain is Ribosomal RNA large subunit methyltransferase H from Thermotoga sp. (strain RQ2).